Here is a 300-residue protein sequence, read N- to C-terminus: 33 kDa chaperonin (300 aa).

2 disulfide bridges follow: C235–C237 and C269–C272.

It belongs to the HSP33 family. In terms of processing, under oxidizing conditions two disulfide bonds are formed involving the reactive cysteines. Under reducing conditions zinc is bound to the reactive cysteines and the protein is inactive.

The protein localises to the cytoplasm. Its function is as follows. Redox regulated molecular chaperone. Protects both thermally unfolding and oxidatively damaged proteins from irreversible aggregation. Plays an important role in the bacterial defense system toward oxidative stress. The sequence is that of 33 kDa chaperonin from Pseudomonas fluorescens (strain Pf0-1).